The following is a 704-amino-acid chain: Pentatricopeptide repeat-containing protein At1g56690, mitochondrial (704 aa).

Residues 1–12 (MKRLKLILRRTY) constitute a mitochondrion transit peptide. 15 PPR repeats span residues 16–46 (TGVN…LQFK), 47–81 (AIGS…NVVS), 82–108 (WNGL…MPER), 109–143 (NVVS…NEVS), 144–170 (WTVM…MPVK), 171–205 (DVVA…NVVT), 206–232 (WTTM…MPEK), 233–267 (TEVS…PVIA), 268–294 (CNAM…MEDR), 295–329 (DNAT…GVRP), 330–364 (SFPS…QFDD), 365–395 (DVYV…FSSK), 396–430 (DIIM…GTMP), 431–465 (NKVT…FCVT), and 467–497 (TVEH…MTIK). Residues 502 to 577 (VWGALLGACK…FPGCSWIEVG (76 aa)) form a type E motif region. Residues 578 to 609 (KKVHMFTRGGIKNHPEQAMILMMLEKTDGLLR) form a type E(+) motif region. Residues 610-704 (EAGYSPDCSH…NGECSCRDYW (95 aa)) form a type DYW motif region.

Belongs to the PPR family. PCMP-H subfamily.

The protein resides in the mitochondrion. The protein is Pentatricopeptide repeat-containing protein At1g56690, mitochondrial (PCMP-H69) of Arabidopsis thaliana (Mouse-ear cress).